Here is a 920-residue protein sequence, read N- to C-terminus: Isoleucine--tRNA ligase (920 aa).

A 'HIGH' region motif is present at residues 57 to 67; sequence PYANGDIHLGH. Glutamate 560 provides a ligand contact to L-isoleucyl-5'-AMP. The short motif at 601 to 605 is the 'KMSKS' region element; it reads KMSKS. Lysine 604 provides a ligand contact to ATP. The Zn(2+) site is built by cysteine 890, cysteine 893, cysteine 910, and cysteine 913.

Belongs to the class-I aminoacyl-tRNA synthetase family. IleS type 1 subfamily. As to quaternary structure, monomer. The cofactor is Zn(2+).

It is found in the cytoplasm. The catalysed reaction is tRNA(Ile) + L-isoleucine + ATP = L-isoleucyl-tRNA(Ile) + AMP + diphosphate. Catalyzes the attachment of isoleucine to tRNA(Ile). As IleRS can inadvertently accommodate and process structurally similar amino acids such as valine, to avoid such errors it has two additional distinct tRNA(Ile)-dependent editing activities. One activity is designated as 'pretransfer' editing and involves the hydrolysis of activated Val-AMP. The other activity is designated 'posttransfer' editing and involves deacylation of mischarged Val-tRNA(Ile). This is Isoleucine--tRNA ligase from Caldicellulosiruptor saccharolyticus (strain ATCC 43494 / DSM 8903 / Tp8T 6331).